Here is a 243-residue protein sequence, read N- to C-terminus: MGRGPSIENRKNASDAKRGKIFTKIIREIGVAARGGGGDPNNNPRLRVAMDKGLTANMSKDVIERAIKKATGELEGVEYEEIRYEGYAPGGVAVIVDCLTDNRVRTVADVRHAFSKCGGNMGTEGSVSFMFKRVGVLHFAAGADEDAISEAAIEAGADDIVVYPEDGAIDVLTAADSYHAVKEAMAAAGRTPDHAELTFRADNDIKVEGDTVLQVKKLLDMLEDLDDVQDVYSNADLGADAYA.

It belongs to the TACO1 family.

The protein resides in the cytoplasm. This chain is Probable transcriptional regulatory protein Smal_3128, found in Stenotrophomonas maltophilia (strain R551-3).